Here is a 363-residue protein sequence, read N- to C-terminus: sn-glycerol-3-phosphate import ATP-binding protein UgpC (363 aa).

Positions 4 to 235 constitute an ABC transporter domain; that stretch reads VVLRNVRKTY…PATTFVASFI (232 aa). An ATP-binding site is contributed by 37–44; sequence GPSGCGKS.

Belongs to the ABC transporter superfamily. sn-glycerol-3-phosphate importer (TC 3.A.1.1.3) family. In terms of assembly, the complex is composed of two ATP-binding proteins (UgpC), two transmembrane proteins (UgpA and UgpE) and a solute-binding protein (UgpB).

The protein resides in the cell inner membrane. It catalyses the reaction sn-glycerol 3-phosphate(out) + ATP + H2O = sn-glycerol 3-phosphate(in) + ADP + phosphate + H(+). In terms of biological role, part of the ABC transporter complex UgpBAEC involved in sn-glycerol-3-phosphate (G3P) import. Responsible for energy coupling to the transport system. This is sn-glycerol-3-phosphate import ATP-binding protein UgpC from Rhodopseudomonas palustris (strain ATCC BAA-98 / CGA009).